The following is a 344-amino-acid chain: Arginine N-succinyltransferase (344 aa).

L125 serves as a coordination point for succinyl-CoA. Residue H229 is the Proton donor of the active site.

It belongs to the arginine N-succinyltransferase family.

The catalysed reaction is succinyl-CoA + L-arginine = N(2)-succinyl-L-arginine + CoA + H(+). It participates in amino-acid degradation; L-arginine degradation via AST pathway; L-glutamate and succinate from L-arginine: step 1/5. Its function is as follows. Catalyzes the transfer of succinyl-CoA to arginine to produce N(2)-succinylarginine. In Escherichia coli O6:K15:H31 (strain 536 / UPEC), this protein is Arginine N-succinyltransferase.